Reading from the N-terminus, the 37-residue chain is Large ribosomal subunit protein bL36c (37 aa).

Belongs to the bacterial ribosomal protein bL36 family.

It is found in the plastid. The protein resides in the chloroplast. The chain is Large ribosomal subunit protein bL36c from Lotus japonicus (Lotus corniculatus var. japonicus).